The primary structure comprises 182 residues: Large ribosomal subunit protein bL25 (182 aa).

The protein belongs to the bacterial ribosomal protein bL25 family. CTC subfamily. As to quaternary structure, part of the 50S ribosomal subunit; part of the 5S rRNA/L5/L18/L25 subcomplex. Contacts the 5S rRNA. Binds to the 5S rRNA independently of L5 and L18.

This is one of the proteins that binds to the 5S RNA in the ribosome where it forms part of the central protuberance. The chain is Large ribosomal subunit protein bL25 from Borrelia duttonii (strain Ly).